We begin with the raw amino-acid sequence, 200 residues long: dITP/XTP pyrophosphatase (200 aa).

Residue 8–13 (TGNQGK) coordinates substrate. Catalysis depends on Asp69, which acts as the Proton acceptor. Asp69 contacts Mg(2+). Residues Ser70, 154 to 157 (FGYD), Lys177, and 182 to 183 (HR) contribute to the substrate site.

Belongs to the HAM1 NTPase family. As to quaternary structure, homodimer. Mg(2+) serves as cofactor.

It catalyses the reaction XTP + H2O = XMP + diphosphate + H(+). The enzyme catalyses dITP + H2O = dIMP + diphosphate + H(+). The catalysed reaction is ITP + H2O = IMP + diphosphate + H(+). Functionally, pyrophosphatase that catalyzes the hydrolysis of nucleoside triphosphates to their monophosphate derivatives, with a high preference for the non-canonical purine nucleotides XTP (xanthosine triphosphate), dITP (deoxyinosine triphosphate) and ITP. Seems to function as a house-cleaning enzyme that removes non-canonical purine nucleotides from the nucleotide pool, thus preventing their incorporation into DNA/RNA and avoiding chromosomal lesions. This Vibrio cholerae serotype O1 (strain ATCC 39315 / El Tor Inaba N16961) protein is dITP/XTP pyrophosphatase.